The primary structure comprises 300 residues: MKNKTTIRWLKQALVLSSIVNILLLLLIYSTVFRKDIYKLQVFPGHLIAKSARIGKIPEDILERLEAASLADLIILLREERLVFGHPLKLWALSMGIQKYSLDITPMLTHPLTFIKLKSPEQTWLLPDINDQEFSRINQYLHTERFPFSSKGFFRIMARDWEAGIVNEDILYRFCHIPEFLYVRSLLFGAEIEAASVASLARMVIQGGEDLFFSLCCLENLQTAISDQQRRVFLKAYVDRQEPLAALLLLVHDADWVLHEFSDTDLKYFVQLLPKEVSYTKQFLDQVGHSCRQEILSILQ.

This sequence belongs to the chlamydial CPn_0593/CT_474/TC_0759 family.

This is an uncharacterized protein from Chlamydia muridarum (strain MoPn / Nigg).